Here is a 130-residue protein sequence, read N- to C-terminus: MAENQNYGTGRRKSSSARVFIKPGSGKITINQRELDVYFGRETARMVVRQPLELVELTDKLDLYITVKGGGISGQAGAIRHGITRALMEYDETLRPALRAAGFVTRDARRVERKKVGLHKARRRPQYSKR.

Belongs to the universal ribosomal protein uS9 family.

The polypeptide is Small ribosomal subunit protein uS9 (Haemophilus influenzae (strain 86-028NP)).